Reading from the N-terminus, the 501-residue chain is GMP synthase [glutamine-hydrolyzing] (501 aa).

The Glutamine amidotransferase type-1 domain occupies 1–185 (MVLVVDYGSQ…LFNVCKLEKN (185 aa)). Residue Cys75 is the Nucleophile of the active site. Catalysis depends on residues His159 and Glu161. Positions 186-376 (WKIGDLVEEK…LGIPDRIINR (191 aa)) constitute a GMPS ATP-PPase domain. 213-219 (SGGVDSS) is a binding site for ATP.

In terms of assembly, homodimer.

The catalysed reaction is XMP + L-glutamine + ATP + H2O = GMP + L-glutamate + AMP + diphosphate + 2 H(+). Its pathway is purine metabolism; GMP biosynthesis; GMP from XMP (L-Gln route): step 1/1. Its function is as follows. Catalyzes the synthesis of GMP from XMP. The polypeptide is GMP synthase [glutamine-hydrolyzing] (guaA) (Thermotoga maritima (strain ATCC 43589 / DSM 3109 / JCM 10099 / NBRC 100826 / MSB8)).